A 370-amino-acid polypeptide reads, in one-letter code: Probable protein phosphatase 2C 67 (370 aa).

The PPM-type phosphatase domain occupies 35-344; it reads TFGEFSMAMI…DDITVIVVYL (310 aa). Mn(2+)-binding residues include Asp77, Gly78, Asp276, and Asp335.

Belongs to the PP2C family. Interacts with SAUR19. Interacts with AHA2 at the plasma membrane. Mg(2+) serves as cofactor. The cofactor is Mn(2+).

Its subcellular location is the cell membrane. It catalyses the reaction O-phospho-L-seryl-[protein] + H2O = L-seryl-[protein] + phosphate. The enzyme catalyses O-phospho-L-threonyl-[protein] + H2O = L-threonyl-[protein] + phosphate. In terms of biological role, dephosphorylates and represses plasma membrane H(+)-ATPases (PM H(+)-ATPases, e.g. AHA1 and AHA2), thus influencing negatively plant growth and fitness. Promotes the apical hook maintenance of etiolated seedlings. The polypeptide is Probable protein phosphatase 2C 67 (Arabidopsis thaliana (Mouse-ear cress)).